Reading from the N-terminus, the 347-residue chain is Holliday junction branch migration complex subunit RuvB (347 aa).

The interval 1-182 (MSAQNPVLTP…FGIPVRLSFY (182 aa)) is large ATPase domain (RuvB-L). Residues Leu-21, Arg-22, Gly-63, Lys-66, Thr-67, Thr-68, 129–131 (EDF), Arg-172, Tyr-182, and Arg-219 each bind ATP. Thr-67 contributes to the Mg(2+) binding site. Residues 183 to 253 (TVEELELIVR…IADEALTRLL (71 aa)) are small ATPAse domain (RuvB-S). Residues 256-347 (NMGLDQLDTR…QFRLTLEDDD (92 aa)) are head domain (RuvB-H). DNA is bound by residues Arg-292, Arg-311, and Arg-316.

Belongs to the RuvB family. As to quaternary structure, homohexamer. Forms an RuvA(8)-RuvB(12)-Holliday junction (HJ) complex. HJ DNA is sandwiched between 2 RuvA tetramers; dsDNA enters through RuvA and exits via RuvB. An RuvB hexamer assembles on each DNA strand where it exits the tetramer. Each RuvB hexamer is contacted by two RuvA subunits (via domain III) on 2 adjacent RuvB subunits; this complex drives branch migration. In the full resolvosome a probable DNA-RuvA(4)-RuvB(12)-RuvC(2) complex forms which resolves the HJ.

It is found in the cytoplasm. It catalyses the reaction ATP + H2O = ADP + phosphate + H(+). Its function is as follows. The RuvA-RuvB-RuvC complex processes Holliday junction (HJ) DNA during genetic recombination and DNA repair, while the RuvA-RuvB complex plays an important role in the rescue of blocked DNA replication forks via replication fork reversal (RFR). RuvA specifically binds to HJ cruciform DNA, conferring on it an open structure. The RuvB hexamer acts as an ATP-dependent pump, pulling dsDNA into and through the RuvAB complex. RuvB forms 2 homohexamers on either side of HJ DNA bound by 1 or 2 RuvA tetramers; 4 subunits per hexamer contact DNA at a time. Coordinated motions by a converter formed by DNA-disengaged RuvB subunits stimulates ATP hydrolysis and nucleotide exchange. Immobilization of the converter enables RuvB to convert the ATP-contained energy into a lever motion, pulling 2 nucleotides of DNA out of the RuvA tetramer per ATP hydrolyzed, thus driving DNA branch migration. The RuvB motors rotate together with the DNA substrate, which together with the progressing nucleotide cycle form the mechanistic basis for DNA recombination by continuous HJ branch migration. Branch migration allows RuvC to scan DNA until it finds its consensus sequence, where it cleaves and resolves cruciform DNA. The protein is Holliday junction branch migration complex subunit RuvB of Allorhizobium ampelinum (strain ATCC BAA-846 / DSM 112012 / S4) (Agrobacterium vitis (strain S4)).